The following is a 368-amino-acid chain: Meiotic driver wtf23 (368 aa).

The tract at residues 1–98 (MKNKYYPLRS…SSGTADNSST (98 aa)) is disordered. A compositionally biased stretch (basic and acidic residues) spans 11 to 29 (SMDELSAKNDNEIDLEKGP). Polar residues-rich tracts occupy residues 57–72 (GANNPNLFNTDESTTP) and 89–98 (SSGTADNSST). Helical transmembrane passes span 105-124 (FLSFISIFVLNVPAVCYLTY), 139-158 (YFGVWCAICLMIFISLWYFY), 170-192 (IFLAQCIKVTVVFLAQCVKVISI), 202-221 (MIIIWLLWLIICCILFGCVK), 234-256 (STCTISAVLLLIVSSVCIPFWTF), 266-283 (VFLLQSGIVLVLNGTMFL), and 328-350 (GIAFILGGIGNAMMGLANAFRGG).

It belongs to the WTF family. As to quaternary structure, homomer. Forms protein aggregates. The two isoforms can interact with each other and with themselves. High sequence similarity is required for their interaction.

Its subcellular location is the spore membrane. It localises to the vacuole membrane. It is found in the ascus epiplasm. The protein resides in the cytoplasm. The protein localises to the endoplasmic reticulum membrane. In terms of biological role, promotes unequal transmission of alleles from the parental zygote to progeny spores by acting as poison/antidote system where the poison and antidote proteins are produced from the same locus; the poison component is trans-acting and targets all spores within an ascus whereas the antidote component is spore-specific, leading to poisoning of all progeny that do not inherit the allele. Functionally, localizes isoform 2 to the vacuole thereby facilitating its degradation. Its function is as follows. Forms toxic aggregates that disrupt spore maturation. The sequence is that of Meiotic driver wtf23 from Schizosaccharomyces pombe (strain 972 / ATCC 24843) (Fission yeast).